A 253-amino-acid polypeptide reads, in one-letter code: 5'/3'-nucleotidase SurE (253 aa).

A divalent metal cation is bound by residues D8, D9, S39, and N92.

Belongs to the SurE nucleotidase family. It depends on a divalent metal cation as a cofactor.

The protein resides in the cytoplasm. The enzyme catalyses a ribonucleoside 5'-phosphate + H2O = a ribonucleoside + phosphate. It carries out the reaction a ribonucleoside 3'-phosphate + H2O = a ribonucleoside + phosphate. The catalysed reaction is [phosphate](n) + H2O = [phosphate](n-1) + phosphate + H(+). In terms of biological role, nucleotidase with a broad substrate specificity as it can dephosphorylate various ribo- and deoxyribonucleoside 5'-monophosphates and ribonucleoside 3'-monophosphates with highest affinity to 3'-AMP. Also hydrolyzes polyphosphate (exopolyphosphatase activity) with the preference for short-chain-length substrates (P20-25). Might be involved in the regulation of dNTP and NTP pools, and in the turnover of 3'-mononucleotides produced by numerous intracellular RNases (T1, T2, and F) during the degradation of various RNAs. The sequence is that of 5'/3'-nucleotidase SurE from Escherichia coli O7:K1 (strain IAI39 / ExPEC).